An 871-amino-acid chain; its full sequence is Patatin-like phospholipase domain-containing protein CNBE2340 (871 aa).

Residues 20 to 53 are disordered; the sequence is NEDSPLSPRSFSLPPESPQLSTASPIHQRVSRKR. The span at 23 to 33 shows a compositional bias: low complexity; it reads SPLSPRSFSLP. Residues 68–88 traverse the membrane as a helical segment; sequence WPLLFFIFFIIYLEFSAYVIT. In terms of domain architecture, PNPLA spans 243 to 435; the sequence is LCLSGGASFG…REDIPLGSLH (193 aa). Positions 274–278 match the GXSXG motif; that stretch reads GTSAG. Serine 276 serves as the catalytic Nucleophile. Aspartate 422 (proton acceptor) is an active-site residue. Disordered stretches follow at residues 586 to 707, 720 to 748, and 760 to 871; these read ALSH…NFGD, LSSP…QRFR, and VSES…QDGA. 2 stretches are compositionally biased toward polar residues: residues 594 to 606 and 687 to 706; these read NDPA…TNPE and PTHS…SNFG. The span at 721 to 748 shows a compositional bias: low complexity; it reads SSPFRSIRSNTSSSSNNVQSPSSSQRFR. Basic and acidic residues predominate over residues 798-820; the sequence is VESHSDRSEDEMLHSGANVKEEY.

It belongs to the PLPL family.

It is found in the membrane. Probable lipid hydrolase. The protein is Patatin-like phospholipase domain-containing protein CNBE2340 of Cryptococcus neoformans var. neoformans serotype D (strain B-3501A) (Filobasidiella neoformans).